Reading from the N-terminus, the 540-residue chain is L-aspartate oxidase (540 aa).

Residues 16-19 (SGAA), Lys38, 45-52 (STFYAQGG), and Asp223 each bind FAD. Catalysis depends on Arg290, which acts as the Proton donor/acceptor. FAD contacts are provided by residues Glu375 and 391-392 (SL).

The protein belongs to the FAD-dependent oxidoreductase 2 family. NadB subfamily. FAD is required as a cofactor.

It localises to the cytoplasm. It catalyses the reaction L-aspartate + O2 = iminosuccinate + H2O2. It participates in cofactor biosynthesis; NAD(+) biosynthesis; iminoaspartate from L-aspartate (oxidase route): step 1/1. Functionally, catalyzes the oxidation of L-aspartate to iminoaspartate, the first step in the de novo biosynthesis of NAD(+). The chain is L-aspartate oxidase (nadB) from Salmonella typhimurium (strain LT2 / SGSC1412 / ATCC 700720).